Reading from the N-terminus, the 391-residue chain is Formate-dependent phosphoribosylglycinamide formyltransferase (391 aa).

N(1)-(5-phospho-beta-D-ribosyl)glycinamide is bound by residues 20–21 (EL) and Glu80. Residues Arg112, Lys153, 158–163 (SSGKGQ), 193–196 (EGFV), and Glu201 each bind ATP. Positions 117–306 (RLAAETLGLP…EFALHVRAIL (190 aa)) constitute an ATP-grasp domain. Positions 265 and 277 each coordinate Mg(2+). Residues Asp284, Lys354, and 361–362 (RR) contribute to the N(1)-(5-phospho-beta-D-ribosyl)glycinamide site.

Belongs to the PurK/PurT family. Homodimer.

It carries out the reaction N(1)-(5-phospho-beta-D-ribosyl)glycinamide + formate + ATP = N(2)-formyl-N(1)-(5-phospho-beta-D-ribosyl)glycinamide + ADP + phosphate + H(+). It functions in the pathway purine metabolism; IMP biosynthesis via de novo pathway; N(2)-formyl-N(1)-(5-phospho-D-ribosyl)glycinamide from N(1)-(5-phospho-D-ribosyl)glycinamide (formate route): step 1/1. Functionally, involved in the de novo purine biosynthesis. Catalyzes the transfer of formate to 5-phospho-ribosyl-glycinamide (GAR), producing 5-phospho-ribosyl-N-formylglycinamide (FGAR). Formate is provided by PurU via hydrolysis of 10-formyl-tetrahydrofolate. This is Formate-dependent phosphoribosylglycinamide formyltransferase from Shewanella sp. (strain W3-18-1).